Consider the following 432-residue polypeptide: Enolase (432 aa).

Glutamine 164 serves as a coordination point for (2R)-2-phosphoglycerate. Glutamate 206 serves as the catalytic Proton donor. The Mg(2+) site is built by aspartate 243, glutamate 284, and aspartate 311. (2R)-2-phosphoglycerate contacts are provided by lysine 336, arginine 365, serine 366, and lysine 387. Residue lysine 336 is the Proton acceptor of the active site.

The protein belongs to the enolase family. It depends on Mg(2+) as a cofactor.

The protein resides in the cytoplasm. The protein localises to the secreted. Its subcellular location is the cell surface. It carries out the reaction (2R)-2-phosphoglycerate = phosphoenolpyruvate + H2O. Its pathway is carbohydrate degradation; glycolysis; pyruvate from D-glyceraldehyde 3-phosphate: step 4/5. Functionally, catalyzes the reversible conversion of 2-phosphoglycerate (2-PG) into phosphoenolpyruvate (PEP). It is essential for the degradation of carbohydrates via glycolysis. The protein is Enolase of Synechococcus sp. (strain JA-3-3Ab) (Cyanobacteria bacterium Yellowstone A-Prime).